Reading from the N-terminus, the 50-residue chain is Mating-type pheromone BAP1(1) (50 aa).

The disordered stretch occupies residues 1–32 (MDGEGHDINIWGARMSPSPAAAPVSATRGAPW). Positions 16 to 26 (SPSPAAAPVSA) are enriched in low complexity. The residue at position 47 (cysteine 47) is a Cysteine methyl ester. The S-farnesyl cysteine moiety is linked to residue cysteine 47. The propeptide at 48–50 (VCH) is removed in mature form.

Its subcellular location is the cell membrane. Functionally, activates B-regulated development. The sequence is that of Mating-type pheromone BAP1(1) (BAP1(1)) from Schizophyllum commune (Split gill fungus).